Here is a 496-residue protein sequence, read N- to C-terminus: Transcription termination factor MTERF9, chloroplastic (496 aa).

A chloroplast-targeting transit peptide spans 1–44; sequence MAGFSLYCFKNPRILFTLPSESPLFVLGSDKCSPATRRPSRKTR. Disordered stretches follow at residues 57–90 and 102–155; these read IINPKKKSRYGQTLSPYDSDEDDDDDDDDDDDDW and YEKK…SWRL. Positions 74–90 are enriched in acidic residues; sequence DSDEDDDDDDDDDDDDW. A compositionally biased stretch (basic residues) spans 105 to 123; sequence KKPKSHKQTIAKKSVKKGI. Over residues 146 to 155 the composition is skewed to basic and acidic residues; sequence SEKKKESWRL.

This sequence belongs to the mTERF family.

The protein resides in the plastid. It is found in the chloroplast. Functionally, transcription termination factor required for processing and steady-state levels of plastid transcripts. May play a role in response to abiotic stresses. The sequence is that of Transcription termination factor MTERF9, chloroplastic from Arabidopsis thaliana (Mouse-ear cress).